We begin with the raw amino-acid sequence, 465 residues long: MRNLSFIVLFLLTLFFIHHLVDASLLVKSLPGFEGPLPFELETGYVSIGESGDVELFYYFVKSERNPENDPLMIWLTGGPGCSSICGLLFANGPLAFKGDEYNGTVPPLELTSFSWTKVANILYLEAPAGSGYSYAKTRRAFESSDTKQMHQIDQFLRSWFVKHPEFISNPFYVGGDSYSGKIVPGAVQQISLGNEKGLTPLINIQGYVLGNPVTDKNIETNYRVPFAHGMGLISDELFESLERSCGGKFFNVDPSNARCSNNLQAYDHCMSEIYSEHILLRNCKVDYVLADTPNIRTDRRRVMKEFSVNDSSSLPPPSCFTYRYFLSAFWANDENVRRALGVKKEVGKWNRCNSQNIPYTFEIFNAVPYHVNNSLKGFRSLIYSGDHDSMVPFSSTQAWIRALNYSIVDDWRPWMMSSNQVAGYTRTYANKMTFATIKGGGHTAEYTPDQCSLMFRRWIDGEPL.

A signal peptide spans 1–23 (MRNLSFIVLFLLTLFFIHHLVDA). 77–79 (TGG) is a substrate binding site. 3 disulfides stabilise this stretch: Cys82–Cys353, Cys246–Cys260, and Cys284–Cys320. A glycan (N-linked (GlcNAc...) asparagine) is linked at Asn103. 177-179 (DSY) is a substrate binding site. Residue Ser178 is part of the active site. Residues 292-317 (DTPNIRTDRRRVMKEFSVNDSSSLPP) constitute a propeptide, linker peptide. Asn310 and Asn373 each carry an N-linked (GlcNAc...) asparagine glycan. The active site involves Asp389. N-linked (GlcNAc...) asparagine glycosylation is present at Asn405. 439–443 (KGGGH) contributes to the substrate binding site. His443 is an active-site residue.

Belongs to the peptidase S10 family. In terms of assembly, heterodimer. N-glycosylated. In terms of tissue distribution, expressed in roots and flowers, and at lower levels in young leaves and seedlings. Expressed in mature seeds and detected in expanding siliques.

Its subcellular location is the secreted. It carries out the reaction 1-O-(trans-sinapoyl)-beta-D-glucose + choline = O-sinapoylcholine + D-glucose. Slightly inhibited by phenylmethylsulfonyl fluoride (PMSF). Its function is as follows. Involved in plants secondary metabolism. Functions as acyltransferase to form the sinapate ester sinapoylcholine also known as sinapine. Able to convert in vitro benzoylglucose into benzoylcholine. This Arabidopsis thaliana (Mouse-ear cress) protein is Serine carboxypeptidase-like 19.